The chain runs to 945 residues: Collagen-like protein 1 (945 aa).

2 disordered regions span residues 80–226 (SLKG…SPDL) and 257–441 (GEKG…DKGE). 2 Collagen-like domains span residues 83–142 (GDPG…QGDK) and 146–205 (GDVG…KGDK). Composition is skewed to basic and acidic residues over residues 109-145 (QGTK…KGDQ) and 168-208 (DQGD…KGDK). N-linked (GlcNAc...) asparagine; by host glycosylation occurs at N211. Collagen-like domains are found at residues 257–376 (GEKG…KGDK), 383–442 (GDKG…KGEN), 488–547 (GEKG…VGDK), 554–613 (GDKG…KGDV), and 635–694 (GDKG…VGAS). The N-linked (GlcNAc...) asparagine; by host glycan is linked to N442. Basic and acidic residues predominate over residues 488–687 (GEKGDKGDTG…DKGDKGDKGD (200 aa)). Residues 488-712 (GEKGDKGDTG…SPTTGENGDS (225 aa)) are disordered. The span at 703 to 712 (SPTTGENGDS) shows a compositional bias: polar residues. A glycan (N-linked (GlcNAc...) asparagine; by host) is linked at N716. The tract at residues 733 to 768 (TNIKGDKGDKGDKGDKGDKGDTGDVGLKGDTGTPGS) is disordered. The span at 736–754 (KGDKGDKGDKGDKGDKGDT) shows a compositional bias: basic and acidic residues. Residues 756-765 (DVGLKGDTGT) show a composition bias toward low complexity.

In terms of processing, may be hydroxylated on lysine by the viral-encoded procollagen-lysine,2-oxoglutarate 5-dioxygenase.

It localises to the virion. May participate in the formation of a layer of cross-linked glycosylated fibrils at the viral surface thus giving it a hairy-like appearance. In Acanthamoeba polyphaga mimivirus (APMV), this protein is Collagen-like protein 1.